The chain runs to 371 residues: Peptide chain release factor 2 (371 aa).

N5-methylglutamine is present on Gln-253.

The protein belongs to the prokaryotic/mitochondrial release factor family. In terms of processing, methylated by PrmC. Methylation increases the termination efficiency of RF2.

It is found in the cytoplasm. Its function is as follows. Peptide chain release factor 2 directs the termination of translation in response to the peptide chain termination codons UGA and UAA. In Mycobacterium sp. (strain JLS), this protein is Peptide chain release factor 2.